The chain runs to 294 residues: 4-hydroxy-tetrahydrodipicolinate synthase (294 aa).

Threonine 47 provides a ligand contact to pyruvate. The active-site Proton donor/acceptor is tyrosine 135. Lysine 163 functions as the Schiff-base intermediate with substrate in the catalytic mechanism. Threonine 205 contacts pyruvate.

This sequence belongs to the DapA family. As to quaternary structure, homotetramer; dimer of dimers.

The protein localises to the cytoplasm. The catalysed reaction is L-aspartate 4-semialdehyde + pyruvate = (2S,4S)-4-hydroxy-2,3,4,5-tetrahydrodipicolinate + H2O + H(+). It functions in the pathway amino-acid biosynthesis; L-lysine biosynthesis via DAP pathway; (S)-tetrahydrodipicolinate from L-aspartate: step 3/4. In terms of biological role, catalyzes the condensation of (S)-aspartate-beta-semialdehyde [(S)-ASA] and pyruvate to 4-hydroxy-tetrahydrodipicolinate (HTPA). This chain is 4-hydroxy-tetrahydrodipicolinate synthase, found in Rickettsia peacockii (strain Rustic).